We begin with the raw amino-acid sequence, 455 residues long: Argininosuccinate lyase (455 aa).

Belongs to the lyase 1 family. Argininosuccinate lyase subfamily.

The protein localises to the cytoplasm. It catalyses the reaction 2-(N(omega)-L-arginino)succinate = fumarate + L-arginine. It functions in the pathway amino-acid biosynthesis; L-arginine biosynthesis; L-arginine from L-ornithine and carbamoyl phosphate: step 3/3. The chain is Argininosuccinate lyase from Shewanella oneidensis (strain ATCC 700550 / JCM 31522 / CIP 106686 / LMG 19005 / NCIMB 14063 / MR-1).